The chain runs to 302 residues: Deoxyhypusine hydroxylase (302 aa).

HEAT-like PBS-type repeat units lie at residues 23–49 (ERFR…AFDD), 54–80 (LKHE…VLKD), 87–113 (VRHE…YKKD), 175–201 (DRYR…GLKD), 206–232 (FRHE…NLED), and 239–265 (VRHE…YADD). 4 residues coordinate Fe cation: His56, Glu57, His89, and Glu90. The Fe cation site is built by His208, Glu209, His241, and Glu242.

Belongs to the deoxyhypusine hydroxylase family. Requires Fe(2+) as cofactor.

The protein localises to the endoplasmic reticulum membrane. The enzyme catalyses [eIF5A protein]-deoxyhypusine + AH2 + O2 = [eIF5A protein]-hypusine + A + H2O. Its pathway is protein modification; eIF5A hypusination. Its function is as follows. Catalyzes the hydroxylation of the N(6)-(4-aminobutyl)-L-lysine intermediate to form hypusine, an essential post-translational modification only found in mature eIF-5A factor. Essential for organismal viability and plays a role in a wide number of important processes such as cell growth and proliferation, and regulates induction of autophagy and protein synthesis. Has a role in eIF-5A-mediated translational control. The sequence is that of Deoxyhypusine hydroxylase from Drosophila pseudoobscura pseudoobscura (Fruit fly).